Reading from the N-terminus, the 101-residue chain is Small ribosomal subunit protein uS14 (101 aa).

A disordered region spans residues Gly32–Asn62. Residues Asp33 to Ala44 are compositionally biased toward basic and acidic residues.

This sequence belongs to the universal ribosomal protein uS14 family. Part of the 30S ribosomal subunit. Contacts proteins S3 and S10.

In terms of biological role, binds 16S rRNA, required for the assembly of 30S particles and may also be responsible for determining the conformation of the 16S rRNA at the A site. This is Small ribosomal subunit protein uS14 from Verminephrobacter eiseniae (strain EF01-2).